A 1391-amino-acid polypeptide reads, in one-letter code: DNA-directed RNA polymerase subunit beta' (1391 aa).

Zn(2+) contacts are provided by cysteine 72, cysteine 74, cysteine 87, and cysteine 90. Residues aspartate 462, aspartate 464, and aspartate 466 each contribute to the Mg(2+) site. Zn(2+)-binding residues include cysteine 816, cysteine 890, cysteine 897, and cysteine 900.

Belongs to the RNA polymerase beta' chain family. In terms of assembly, the RNAP catalytic core consists of 2 alpha, 1 beta, 1 beta' and 1 omega subunit. When a sigma factor is associated with the core the holoenzyme is formed, which can initiate transcription. It depends on Mg(2+) as a cofactor. Zn(2+) serves as cofactor.

It carries out the reaction RNA(n) + a ribonucleoside 5'-triphosphate = RNA(n+1) + diphosphate. Functionally, DNA-dependent RNA polymerase catalyzes the transcription of DNA into RNA using the four ribonucleoside triphosphates as substrates. The chain is DNA-directed RNA polymerase subunit beta' from Neisseria gonorrhoeae (strain ATCC 700825 / FA 1090).